The following is a 742-amino-acid chain: Phosphatidylinositol 4-phosphate 5-kinase its3 (742 aa).

Disordered stretches follow at residues 1–21 (MKIDSNGIVNPHSITNEIPSY) and 82–228 (LFKE…PDIG). Composition is skewed to low complexity over residues 90–105 (PSNPTAHSPSSSSNDS) and 129–142 (PSSNSSSSPQLQNL). 2 stretches are compositionally biased toward polar residues: residues 158 to 181 (RSSSNPVTSSQQPPNDRSTLSSSQ) and 193 to 218 (EKNSSNAEPSGSRSGDRGTNVSTSGS). In terms of domain architecture, PIPK spans 264–662 (GHENYVTAYN…RFYKFVESSI (399 aa)). Residues 677 to 742 (QDGQRVNKQQ…RNVTTNTSSS (66 aa)) are disordered. Residues 680-719 (QRVNKQQSVNAGNVRTNNKHGSLNNNTAPSSRNAKSTSAH) are compositionally biased toward polar residues.

As to quaternary structure, interacts with opy1 (via domain PH 1); the interaction is direct but opy1 does not appear to regulate its3 localization or function. Post-translationally, phosphorylated by casein kinase I. Phosphorylation inactivates the enzyme.

It localises to the cell membrane. The enzyme catalyses a 1,2-diacyl-sn-glycero-3-phospho-(1D-myo-inositol 4-phosphate) + ATP = a 1,2-diacyl-sn-glycero-3-phospho-(1D-myo-inositol-4,5-bisphosphate) + ADP + H(+). Catalyzes the phosphorylation of phosphatidylinositol 4-phosphate on the fifth hydroxyl of the myo-inositol ring, to form phosphatidylinositol 4,5-bisphosphate. Involved, together with the calcineurin ppb1, in cytokinesis. The protein is Phosphatidylinositol 4-phosphate 5-kinase its3 (its3) of Schizosaccharomyces pombe (strain 972 / ATCC 24843) (Fission yeast).